Here is an 85-residue protein sequence, read N- to C-terminus: Beta-insect depressant toxin Lqh-dprIT3g (85 aa).

The N-terminal stretch at 1–21 is a signal peptide; it reads MKLLLLLTISASMLIEGLVNA. Residues 22 to 82 enclose the LCN-type CS-alpha/beta domain; it reads DGYIRGGDGC…EWDYETDTCG (61 aa). 4 disulfide bridges follow: Cys-31-Cys-81, Cys-35-Cys-56, Cys-42-Cys-63, and Cys-46-Cys-65. At Gly-82 the chain carries Glycine amide.

The protein belongs to the long (4 C-C) scorpion toxin superfamily. Sodium channel inhibitor family. Beta subfamily. Expressed by the venom gland.

The protein resides in the secreted. Functionally, depressant insect beta-toxins cause a transient contraction paralysis followed by a slow flaccid paralysis. They bind voltage-independently at site-4 of sodium channels (Nav) and block action potentials, primarily by depolarizing the axonal membrane and suppressing the sodium current. This depressant toxin is active only on insects. It is found in a relatively small amount in the venom. The protein is Beta-insect depressant toxin Lqh-dprIT3g of Leiurus hebraeus (Hebrew deathstalker scorpion).